Reading from the N-terminus, the 638-residue chain is Chaperone protein DnaK (638 aa).

A Phosphothreonine; by autocatalysis modification is found at threonine 199. The segment at 600–638 (EINQKKSEENLKKEDTSSESKKDENVVDAEFEEIKDPKK) is disordered. A compositionally biased stretch (basic and acidic residues) spans 602–624 (NQKKSEENLKKEDTSSESKKDEN).

It belongs to the heat shock protein 70 family.

Acts as a chaperone. The protein is Chaperone protein DnaK of Buchnera aphidicola subsp. Schizaphis graminum (strain Sg).